Consider the following 371-residue polypeptide: 4-hydroxy-3-methylbut-2-en-1-yl diphosphate synthase (flavodoxin) (371 aa).

Positions 270, 273, 305, and 312 each coordinate [4Fe-4S] cluster.

Belongs to the IspG family. [4Fe-4S] cluster serves as cofactor.

It carries out the reaction (2E)-4-hydroxy-3-methylbut-2-enyl diphosphate + oxidized [flavodoxin] + H2O + 2 H(+) = 2-C-methyl-D-erythritol 2,4-cyclic diphosphate + reduced [flavodoxin]. The protein operates within isoprenoid biosynthesis; isopentenyl diphosphate biosynthesis via DXP pathway; isopentenyl diphosphate from 1-deoxy-D-xylulose 5-phosphate: step 5/6. Its function is as follows. Converts 2C-methyl-D-erythritol 2,4-cyclodiphosphate (ME-2,4cPP) into 1-hydroxy-2-methyl-2-(E)-butenyl 4-diphosphate. The polypeptide is 4-hydroxy-3-methylbut-2-en-1-yl diphosphate synthase (flavodoxin) (Psychrobacter arcticus (strain DSM 17307 / VKM B-2377 / 273-4)).